The primary structure comprises 147 residues: Putative toxin MJ0142 (147 aa).

Belongs to the UPF0332 family.

Functionally, putative toxin component of a putative type VII toxin-antitoxin (TA) system. Its cognate antitoxin might be MJ0141. The protein is Putative toxin MJ0142 of Methanocaldococcus jannaschii (strain ATCC 43067 / DSM 2661 / JAL-1 / JCM 10045 / NBRC 100440) (Methanococcus jannaschii).